The primary structure comprises 54 residues: ComX pheromone (54 aa).

Positions 1–46 (MQEIVGYLVKNPEVLDEVMKGRASLLNIDKDQLKSIVDAFGGLQIY) are excised as a propeptide. The 3'-geranyl-2',N2-cyclotryptophan moiety is linked to residue Trp51.

In terms of assembly, interacts directly with the sensor histidine kinase ComP and stimulates its activity. In terms of processing, trp-51 is modified by isoprenylation, probably by geranylation, which is essential for activity. Modified by the tryptophan prenyltransferase ComQ before export to the extracellular environment. The type of isoprenyl derivative differs among the different pherotypes and depends on ComX primary sequence.

It localises to the secreted. Part of a major quorum-sensing system that regulates the development of genetic competence. Acts through the activation of the two-component regulatory system ComP/ComA composed of a sensor histidine kinase, ComP, and a response regulator, ComA. This Bacillus mojavensis protein is ComX pheromone.